A 345-amino-acid polypeptide reads, in one-letter code: Very-long-chain 3-oxoacyl-CoA reductase (345 aa).

The chain crosses the membrane as a helical span at residues 26 to 46 (GAAVLLTTGTLFIASRVLTFV). 8 residues coordinate NADP(+): Val71, Asp125, Asp133, Asn152, Tyr219, Lys223, Ile252, and Ser254. Tyr219 serves as the catalytic Proton donor. Lys223 (lowers pKa of active site Tyr) is an active-site residue.

This sequence belongs to the short-chain dehydrogenases/reductases (SDR) family.

The protein resides in the endoplasmic reticulum membrane. It carries out the reaction a very-long-chain (3R)-3-hydroxyacyl-CoA + NADP(+) = a very-long-chain 3-oxoacyl-CoA + NADPH + H(+). Its pathway is lipid metabolism; fatty acid biosynthesis. Its function is as follows. Component of the microsomal membrane bound fatty acid elongation system, which produces the 26-carbon very long-chain fatty acids (VLCFA) from palmitate. Catalyzes the reduction of the 3-ketoacyl-CoA intermediate that is formed in each cycle of fatty acid elongation. VLCFAs serve as precursors for ceramide and sphingolipids. The polypeptide is Very-long-chain 3-oxoacyl-CoA reductase (Aspergillus fumigatus (strain CBS 144.89 / FGSC A1163 / CEA10) (Neosartorya fumigata)).